The chain runs to 193 residues: MGLNDSSGTLVAPKPKGIIDPNTGRPVGEDDPFFLEINNELADKGFLVTSTEALITWARSGSLMFMTFGLACCAVEMIHTSMPRYDSERFGVAPRASPRQSDIMIVAGTLTNKMAPALRKVYDQMPEPRYVISMGSCANGGGYYHYSYSVVRGCDRIVPVDIYVPGCPPSAEALLYGILLLQKKIRRTGTIER.

Residues 1 to 25 (MGLNDSSGTLVAPKPKGIIDPNTGR) are disordered. [4Fe-4S] cluster is bound by residues Cys72, Cys73, Cys137, and Cys167.

It belongs to the complex I 20 kDa subunit family. In terms of assembly, NDH-1 is composed of 14 different subunits. Subunits NuoB, C, D, E, F, and G constitute the peripheral sector of the complex. Requires [4Fe-4S] cluster as cofactor.

It is found in the cell inner membrane. The catalysed reaction is a quinone + NADH + 5 H(+)(in) = a quinol + NAD(+) + 4 H(+)(out). Its function is as follows. NDH-1 shuttles electrons from NADH, via FMN and iron-sulfur (Fe-S) centers, to quinones in the respiratory chain. Couples the redox reaction to proton translocation (for every two electrons transferred, four hydrogen ions are translocated across the cytoplasmic membrane), and thus conserves the redox energy in a proton gradient. This Mesorhizobium japonicum (strain LMG 29417 / CECT 9101 / MAFF 303099) (Mesorhizobium loti (strain MAFF 303099)) protein is NADH-quinone oxidoreductase subunit B.